Reading from the N-terminus, the 799-residue chain is Putative aconitate hydratase, mitochondrial (799 aa).

Residues 1–32 (MVRQLVWQRATASRRLAPKCLSPQQLFARRGL) constitute a mitochondrion transit peptide. Residues glutamine 108 and 201–203 (DSH) each bind substrate. The [4Fe-4S] cluster site is built by cysteine 399, cysteine 462, and cysteine 465. 2 residues coordinate substrate: arginine 489 and arginine 494. The disordered stretch occupies residues 538–564 (KFRPPQGSDLPSAGFADGNPALQPSAG). 685–686 (AR) serves as a coordination point for substrate.

This sequence belongs to the aconitase/IPM isomerase family.

The protein resides in the mitochondrion. Its function is as follows. Has no detectable activity towards cis-acontiate or cis-homoaconitate. This is Putative aconitate hydratase, mitochondrial (acoB) from Aspergillus fumigatus (strain ATCC MYA-4609 / CBS 101355 / FGSC A1100 / Af293) (Neosartorya fumigata).